A 561-amino-acid chain; its full sequence is Excitatory amino acid transporter 4 (561 aa).

Residues 1–52 lie on the Cytoplasmic side of the membrane; sequence MSSHGNSLFLRESGAGGGCLQGLQDSLQQRALRTRLRLQTMTREHVRRFLRR. The residue at position 2 (serine 2) is a Phosphoserine. 3 consecutive transmembrane segments (helical) span residues 53-73, 96-116, and 130-150; these read NAFI…AFAL, MLQM…MASL, and VYYM…VTII. N-linked (GlcNAc...) asparagine glycans are attached at residues asparagine 213, asparagine 229, and asparagine 236. 3 consecutive transmembrane segments (helical) span residues 259 to 282, 292 to 319, and 341 to 362; these read SANG…IGGM, FFDS…LFLI, and LTVI…YFLV. An intramembrane region (discontinuously helical) is located at residues 368-398; sequence FPFIGGMLQALITAMGTSSSSATLPITFRCL. 385-387 lines the L-aspartate pocket; the sequence is SSS. Residues 408–434 traverse the membrane as a helical segment; sequence ITRFVLPVGATVNMDGTALYEALAAIF. 3 residues coordinate Na(+): glycine 416, threonine 418, and asparagine 420. L-aspartate contacts are provided by residues threonine 424, 465-469, aspartate 498, and asparagine 505; that span reads IPQAG. The discontinuously helical intramembrane region spans 448 to 481; the sequence is ITTISITATAASVGAAGIPQAGLVTMVIVLTSVG. A helical transmembrane segment spans residues 495–516; that stretch reads WFLDRLRTMTNVLGDSIGAAVI. Asparagine 505 and aspartate 509 together coordinate Na(+).

It belongs to the dicarboxylate/amino acid:cation symporter (DAACS) (TC 2.A.23) family. SLC1A6 subfamily. Homotrimer. As to expression, brain specific.

The protein resides in the cell membrane. The enzyme catalyses K(+)(in) + L-glutamate(out) + 3 Na(+)(out) + H(+)(out) = K(+)(out) + L-glutamate(in) + 3 Na(+)(in) + H(+)(in). It carries out the reaction K(+)(in) + L-aspartate(out) + 3 Na(+)(out) + H(+)(out) = K(+)(out) + L-aspartate(in) + 3 Na(+)(in) + H(+)(in). It catalyses the reaction D-aspartate(out) + K(+)(in) + 3 Na(+)(out) + H(+)(out) = D-aspartate(in) + K(+)(out) + 3 Na(+)(in) + H(+)(in). In terms of biological role, sodium-dependent, high-affinity amino acid transporter that mediates the uptake of L-glutamate and also L-aspartate and D-aspartate. Functions as a symporter that transports one amino acid molecule together with two or three Na(+) ions and one proton, in parallel with the counter-transport of one K(+) ion. Mediates Cl(-) flux that is not coupled to amino acid transport; this avoids the accumulation of negative charges due to aspartate and Na(+) symport. Plays a redundant role in the rapid removal of released glutamate from the synaptic cleft, which is essential for terminating the postsynaptic action of glutamate. In Mus musculus (Mouse), this protein is Excitatory amino acid transporter 4 (Slc1a6).